The chain runs to 360 residues: Glutamate--cysteine ligase (360 aa).

This sequence belongs to the glutamate--cysteine ligase type 2 family. YbdK subfamily.

It catalyses the reaction L-cysteine + L-glutamate + ATP = gamma-L-glutamyl-L-cysteine + ADP + phosphate + H(+). Catalyzes the synthesis of gamma-glutamylcysteine (gamma-GC), the main low-molecular-weight thiol compound instead of glutathione in halophilic archaea. The sequence is that of Glutamate--cysteine ligase from Halobacterium salinarum (strain ATCC 29341 / DSM 671 / R1).